A 311-amino-acid polypeptide reads, in one-letter code: Short chain dehydrogenase opdN (311 aa).

Leu48, Lys73, Glu96, Asn123, Tyr217, and Lys221 together coordinate NADP(+). The active-site Proton donor is the Tyr217. Lys221 functions as the Lowers pKa of active site Tyr in the catalytic mechanism.

Belongs to the short-chain dehydrogenases/reductases (SDR) family.

It functions in the pathway secondary metabolite biosynthesis. In terms of biological role, short chain dehydrogenase; part of the gene cluster that mediates the biosynthesis of oxopyrrolidines, polyketide-amino acid hybrid compounds with feature structures of tetramic acid. Does not seem to play a role in oxopyrrolidines A and B biosynthesis. May be involved in further modifications of these oxopyrrolidines. The sequence is that of Short chain dehydrogenase opdN from Penicillium oxalicum (strain 114-2 / CGMCC 5302) (Penicillium decumbens).